We begin with the raw amino-acid sequence, 503 residues long: Methylthioalkylmalate synthase 3, chloroplastic (503 aa).

The transit peptide at 1–51 directs the protein to the chloroplast; it reads MASLLLTSSSMITTSCRSMVLRSGLPIGSSFPSLRLTRPYDKATLFVSCCS. Positions 85-359 constitute a Pyruvate carboxyltransferase domain; it reads VRVLDTTLRD…YTKIDSRQIM (275 aa).

It belongs to the alpha-IPM synthase/homocitrate synthase family. Requires Mn(2+) as cofactor. As to expression, highly expressed in roots, leaves, and siliques. Lower amounts in stems and flowers.

The protein localises to the plastid. Its subcellular location is the chloroplast. The catalysed reaction is an omega-(methylsulfanyl)-2-oxoalkanoate + acetyl-CoA + H2O = a 2-(omega-methylsulfanyl)alkylmalate + CoA + H(+). Not activated by ATP. In terms of biological role, determines the side chain length of aliphatic glucosinolate structures. Accepts all the omega-methylthio-2-oxoalkanoic acids needed to form the known C3 to C8 glucosinolates. Also able to convert pyruvate to citramalate, 2-oxoisovalerate to isopropylmalate, 4-methyl-2-oxopentanoate and 5-methyl-2-oxohexanoate for Leu-derived glucosinolates, 3-methyl-2-oxopentanoate for Ile-derived glucosinolates and phenylpyruvate to phenylethylglucosinolate. The chain is Methylthioalkylmalate synthase 3, chloroplastic (MAM3) from Arabidopsis thaliana (Mouse-ear cress).